A 522-amino-acid chain; its full sequence is 2-isopropylmalate synthase (522 aa).

Positions 5–267 constitute a Pyruvate carboxyltransferase domain; it reads VIIFDTTLRD…ETGINAKEIH (263 aa). 4 residues coordinate Mn(2+): Asp14, His202, His204, and Asn238. A regulatory domain region spans residues 392–522; sequence QLQQLVVQSD…MQKNRELGGV (131 aa).

The protein belongs to the alpha-IPM synthase/homocitrate synthase family. LeuA type 1 subfamily. As to quaternary structure, homodimer. Requires Mn(2+) as cofactor.

The protein resides in the cytoplasm. The enzyme catalyses 3-methyl-2-oxobutanoate + acetyl-CoA + H2O = (2S)-2-isopropylmalate + CoA + H(+). Its pathway is amino-acid biosynthesis; L-leucine biosynthesis; L-leucine from 3-methyl-2-oxobutanoate: step 1/4. In terms of biological role, catalyzes the condensation of the acetyl group of acetyl-CoA with 3-methyl-2-oxobutanoate (2-ketoisovalerate) to form 3-carboxy-3-hydroxy-4-methylpentanoate (2-isopropylmalate). The chain is 2-isopropylmalate synthase from Shewanella baltica (strain OS155 / ATCC BAA-1091).